A 430-amino-acid chain; its full sequence is MIAGRRHFDCRPLHLAGNINYEPTVWSRADALKVNENDPTTTQPLVSADFPVMSDTVFIWDTMPLRELDGTVVSVNGWSVILTLTADRHPNDPQYLDANGRYDIKRDWEDRHGRARMCYWYSRTGKDWIFGGRVMAEGVSPTTREWAGTPILLNDKGDIDLYYTCVTPGAAIAKVRGRIVTSDQGVELEDFTLVKKLFEANGTYYQTEAQNSSWNFRDPSPFIDPNDGKLYMVFEGNVAGERGSHTVGAAELGPVPPGHEDVGGARFQVGCIGLAVAKDLSGEEWEILPPLVTAVGVNDQTERPHYVFQDGKYYLFTISHKFTYAEGLTGPDGVYGFVGEHLFGPYRPMNASGLVLGNPPEQPFQTYSHCVMPNGLVTSFIDSVPTEGEDYRIGGTEAPTVRILLKGDRSFVQEEYDYGYIPAMKDVTLS.

Residues tryptophan 60, aspartate 61, alanine 147, arginine 217, and aspartate 218 each coordinate sucrose. The active-site Nucleophile is the aspartate 61. The active-site Proton donor/acceptor is the glutamate 302.

The protein belongs to the glycosyl hydrolase 68 family. As to quaternary structure, homodimer.

The catalysed reaction is [6)-beta-D-fructofuranosyl-(2-&gt;](n) alpha-D-glucopyranoside + sucrose = [6)-beta-D-fructofuranosyl-(2-&gt;](n+1) alpha-D-glucopyranoside + D-glucose. Its activity is regulated as follows. Sucrose hydrolase activity is negatively affected by salt concentration. The levan polymerization rate increases sharply in relation to sucrose concentration reaching the maximum at 100 mM sucrose, and then steadily decreases, suggesting a strong inhibition of the activity by the substrate. Its function is as follows. Catalyzes the synthesis of levan, a fructose polymer, by transferring the fructosyl moiety from sucrose to a growing acceptor molecule. Also displays sucrose hydrolase activity. Can depolymerize the levan produced once substrate is completely exhausted. The polypeptide is Levansucrase Lscgamma (Pseudomonas syringae pv. actinidiae).